Here is a 54-residue protein sequence, read N- to C-terminus: Hydrophobic protein RCI2B (54 aa).

The next 2 helical transmembrane spans lie at 2–22 (STAT…GVFL) and 32–52 (ICLI…LYII).

This sequence belongs to the UPF0057 (PMP3) family.

Its subcellular location is the membrane. In Arabidopsis thaliana (Mouse-ear cress), this protein is Hydrophobic protein RCI2B (RCI2B).